Here is a 331-residue protein sequence, read N- to C-terminus: NADH-quinone oxidoreductase subunit H (331 aa).

Transmembrane regions (helical) follow at residues 6 to 26, 45 to 65, 78 to 98, 120 to 140, 167 to 187, 193 to 213, 241 to 261, 263 to 283, and 311 to 331; these read FFIV…ATLA, GPWM…IKLF, FIFL…MSVI, IGIL…LIGG, GLSL…DIVH, ITSW…IAAF, MRWG…SIVI, LIFL…MIFL, and CWKI…FVII.

It belongs to the complex I subunit 1 family. As to quaternary structure, NDH-1 is composed of 14 different subunits. Subunits NuoA, H, J, K, L, M, N constitute the membrane sector of the complex.

The protein localises to the cell inner membrane. The catalysed reaction is a quinone + NADH + 5 H(+)(in) = a quinol + NAD(+) + 4 H(+)(out). NDH-1 shuttles electrons from NADH, via FMN and iron-sulfur (Fe-S) centers, to quinones in the respiratory chain. The immediate electron acceptor for the enzyme in this species is believed to be ubiquinone. Couples the redox reaction to proton translocation (for every two electrons transferred, four hydrogen ions are translocated across the cytoplasmic membrane), and thus conserves the redox energy in a proton gradient. This subunit may bind ubiquinone. This chain is NADH-quinone oxidoreductase subunit H, found in Campylobacter hominis (strain ATCC BAA-381 / DSM 21671 / CCUG 45161 / LMG 19568 / NCTC 13146 / CH001A).